The sequence spans 524 residues: MAAVAVAVREESRSEMKTELSPRPGAAGRELTQEEKLQLRKEKKQQKKKRKEEKGADQEIGSAVSAAQRQDPIRELPGPGSQLGGTAGEKLPAGRSKAELRAERRAKQEAERALKQARKGEQGGVPPQACPSTAGETTSGVKRVPEHTPADDPTLLRRLLRKPDRQQVPTRKDYGSKVSLFSHLPQYSRQSSLTQYMSIPSSVIHPAMVRLGLQYSQGLISGSNARCIALLHALQQVIQDYTTPPSEELSRDLVNKLKPYISFLTQCRPMSASMCNAIKFLTKEVTGMSSSKREEEAKSELREALDRYVQEKIVLAAQAISRFASTKISDGDVILVYGCSSLVSRILQEARVEGRRFRVVVVDSRPRLEGRHMLHSLVRAGVPTSYLLIPAASYVLPEVSKVLLGAHALLANGSVMSRVGTAQLALVARAHNVPVLVCCETYKFCERVQTDAFVSNELDDPDDLQCKRGDQVALANWQSHPSLRLLNLVYDVTPPELVDLVITELGMIPCSSVPVVLRVKSSDQ.

The tract at residues 1–155 is disordered; the sequence is MAAVAVAVRE…EHTPADDPTL (155 aa). Ala2 carries the N-acetylalanine modification. Composition is skewed to basic and acidic residues over residues 8–20 and 31–40; these read VREE…KTEL and LTQEEKLQLR. Phosphoserine is present on Ser12. Over residues 41–51 the composition is skewed to basic residues; the sequence is KEKKQQKKKRK. Thr86 is subject to Phosphothreonine. The segment covering 96–121 has biased composition (basic and acidic residues); sequence SKAELRAERRAKQEAERALKQARKGE. The segment covering 130 to 140 has biased composition (polar residues); sequence CPSTAGETTSG. The interval 171–180 is may bind the chemical integrated stress response (ISR) inhibitor ISRIB; that stretch reads RKDYGSKVSL.

The protein belongs to the eIF-2B alpha/beta/delta subunits family. In terms of assembly, component of the translation initiation factor 2B (eIF2B) complex which is a heterodecamer of two sets of five different subunits: alpha, beta, gamma, delta and epsilon. Subunits alpha, beta and delta comprise a regulatory subcomplex and subunits epsilon and gamma comprise a catalytic subcomplex. Within the complex, the hexameric regulatory complex resides at the center, with the two heterodimeric catalytic subcomplexes bound on opposite sides.

The protein localises to the cytoplasm. Its subcellular location is the cytosol. With respect to regulation, activated by the chemical integrated stress response (ISR) inhibitor ISRIB which stimulates guanine nucleotide exchange factor activity for both phosphorylated and unphosphorylated eIF2. Functionally, acts as a component of the translation initiation factor 2B (eIF2B) complex, which catalyzes the exchange of GDP for GTP on eukaryotic initiation factor 2 (eIF2) gamma subunit. Its guanine nucleotide exchange factor activity is repressed when bound to eIF2 complex phosphorylated on the alpha subunit, thereby limiting the amount of methionyl-initiator methionine tRNA available to the ribosome and consequently global translation is repressed. The sequence is that of Translation initiation factor eIF2B subunit delta (Eif2b4) from Mus musculus (Mouse).